Here is a 370-residue protein sequence, read N- to C-terminus: DNA replication and repair protein RecF (370 aa).

An ATP-binding site is contributed by 30–37 (GPNGSGKT).

This sequence belongs to the RecF family.

It is found in the cytoplasm. In terms of biological role, the RecF protein is involved in DNA metabolism; it is required for DNA replication and normal SOS inducibility. RecF binds preferentially to single-stranded, linear DNA. It also seems to bind ATP. The polypeptide is DNA replication and repair protein RecF (Prosthecochloris aestuarii (strain DSM 271 / SK 413)).